The following is a 185-amino-acid chain: 3-hydroxyanthranilate 3,4-dioxygenase (185 aa).

Position 44 (Arg44) interacts with O2. Fe cation is bound by residues His48, Glu54, and His95. Glu54 is a binding site for substrate. Substrate is bound by residues Arg99 and Glu109. A divalent metal cation contacts are provided by Cys124, Cys127, Cys161, and Cys164.

This sequence belongs to the 3-HAO family. The cofactor is Fe(2+).

The protein resides in the cytoplasm. It carries out the reaction 3-hydroxyanthranilate + O2 = (2Z,4Z)-2-amino-3-carboxymuconate 6-semialdehyde. The protein operates within cofactor biosynthesis; NAD(+) biosynthesis; quinolinate from L-kynurenine: step 3/3. Functionally, catalyzes the oxidative ring opening of 3-hydroxyanthranilate to 2-amino-3-carboxymuconate semialdehyde, which spontaneously cyclizes to quinolinate. This chain is 3-hydroxyanthranilate 3,4-dioxygenase, found in Podospora anserina (strain S / ATCC MYA-4624 / DSM 980 / FGSC 10383) (Pleurage anserina).